Consider the following 660-residue polypeptide: Bifunctional polymyxin resistance protein ArnA (660 aa).

Positions 1-304 (MKAVIFAYHD…TLGLVAGARL (304 aa)) are formyltransferase ArnAFT. The Proton donor; for formyltransferase activity role is filled by H104. (6R)-10-formyltetrahydrofolate-binding positions include R114 and 136 to 140 (VKRAD). The interval 314–660 (RRIRVLILGV…RSVDVAERAS (347 aa)) is dehydrogenase ArnADH. NAD(+) contacts are provided by residues D347 and 368–369 (DI). UDP-alpha-D-glucuronate contacts are provided by residues A393, Y398, and 432–433 (TS). The active-site Proton acceptor; for decarboxylase activity is the E434. UDP-alpha-D-glucuronate-binding positions include R460, N492, 526-535 (KLIDGGQQKR), and Y613. R619 serves as the catalytic Proton donor; for decarboxylase activity.

This sequence in the N-terminal section; belongs to the Fmt family. UDP-L-Ara4N formyltransferase subfamily. The protein in the C-terminal section; belongs to the NAD(P)-dependent epimerase/dehydratase family. UDP-glucuronic acid decarboxylase subfamily. In terms of assembly, homohexamer, formed by a dimer of trimers.

It carries out the reaction UDP-alpha-D-glucuronate + NAD(+) = UDP-beta-L-threo-pentopyranos-4-ulose + CO2 + NADH. The enzyme catalyses UDP-4-amino-4-deoxy-beta-L-arabinose + (6R)-10-formyltetrahydrofolate = UDP-4-deoxy-4-formamido-beta-L-arabinose + (6S)-5,6,7,8-tetrahydrofolate + H(+). It participates in nucleotide-sugar biosynthesis; UDP-4-deoxy-4-formamido-beta-L-arabinose biosynthesis; UDP-4-deoxy-4-formamido-beta-L-arabinose from UDP-alpha-D-glucuronate: step 1/3. The protein operates within nucleotide-sugar biosynthesis; UDP-4-deoxy-4-formamido-beta-L-arabinose biosynthesis; UDP-4-deoxy-4-formamido-beta-L-arabinose from UDP-alpha-D-glucuronate: step 3/3. It functions in the pathway bacterial outer membrane biogenesis; lipopolysaccharide biosynthesis. In terms of biological role, bifunctional enzyme that catalyzes the oxidative decarboxylation of UDP-glucuronic acid (UDP-GlcUA) to UDP-4-keto-arabinose (UDP-Ara4O) and the addition of a formyl group to UDP-4-amino-4-deoxy-L-arabinose (UDP-L-Ara4N) to form UDP-L-4-formamido-arabinose (UDP-L-Ara4FN). The modified arabinose is attached to lipid A and is required for resistance to polymyxin and cationic antimicrobial peptides. The sequence is that of Bifunctional polymyxin resistance protein ArnA from Salmonella paratyphi C (strain RKS4594).